The primary structure comprises 328 residues: Methionine import ATP-binding protein MetN 1 (328 aa).

Positions 2-241 constitute an ABC transporter domain; it reads ISIERLSKTY…PLSRLGRSLL (240 aa). 38-45 provides a ligand contact to ATP; that stretch reads GRSGAGKS.

It belongs to the ABC transporter superfamily. Methionine importer (TC 3.A.1.24) family. In terms of assembly, the complex is composed of two ATP-binding proteins (MetN), two transmembrane proteins (MetI) and a solute-binding protein (MetQ).

Its subcellular location is the cell inner membrane. It catalyses the reaction L-methionine(out) + ATP + H2O = L-methionine(in) + ADP + phosphate + H(+). The enzyme catalyses D-methionine(out) + ATP + H2O = D-methionine(in) + ADP + phosphate + H(+). Functionally, part of the ABC transporter complex MetNIQ involved in methionine import. Responsible for energy coupling to the transport system. In Yersinia pestis bv. Antiqua (strain Nepal516), this protein is Methionine import ATP-binding protein MetN 1.